The primary structure comprises 150 residues: Large ribosomal subunit protein bL9 (150 aa).

This sequence belongs to the bacterial ribosomal protein bL9 family.

Its function is as follows. Binds to the 23S rRNA. The sequence is that of Large ribosomal subunit protein bL9 from Neisseria gonorrhoeae (strain ATCC 700825 / FA 1090).